We begin with the raw amino-acid sequence, 229 residues long: Ribonuclease 3 (229 aa).

In terms of domain architecture, RNase III spans 5-127; sequence LAGLERKLGY…LIGAIYLDAD (123 aa). Mg(2+) is bound at residue Glu-40. Asp-44 is a catalytic residue. 2 residues coordinate Mg(2+): Asp-113 and Glu-116. Glu-116 is an active-site residue. In terms of domain architecture, DRBM spans 154–224; sequence DPKTRLQEFL…AASALIALGV (71 aa).

The protein belongs to the ribonuclease III family. Homodimer. Mg(2+) serves as cofactor.

The protein resides in the cytoplasm. The enzyme catalyses Endonucleolytic cleavage to 5'-phosphomonoester.. Functionally, digests double-stranded RNA. Involved in the processing of primary rRNA transcript to yield the immediate precursors to the large and small rRNAs (23S and 16S). Processes some mRNAs, and tRNAs when they are encoded in the rRNA operon. Processes pre-crRNA and tracrRNA of type II CRISPR loci if present in the organism. This chain is Ribonuclease 3, found in Pseudomonas putida (strain ATCC 700007 / DSM 6899 / JCM 31910 / BCRC 17059 / LMG 24140 / F1).